The chain runs to 478 residues: Dihydrolipoyl dehydrogenase (478 aa).

FAD contacts are provided by residues 34-49 (EKYI…GGTC), lysine 58, and glycine 122. A disulfide bridge connects residues cysteine 49 and cysteine 54. NAD(+)-binding positions include 188-192 (GAGVI), glutamate 211, valine 245, and 276-279 (AVGR). The FAD site is built by aspartate 319 and alanine 327. The active-site Proton acceptor is histidine 451.

It belongs to the class-I pyridine nucleotide-disulfide oxidoreductase family. Homodimer. It depends on FAD as a cofactor.

It localises to the cytoplasm. It carries out the reaction N(6)-[(R)-dihydrolipoyl]-L-lysyl-[protein] + NAD(+) = N(6)-[(R)-lipoyl]-L-lysyl-[protein] + NADH + H(+). The branched-chain alpha-keto dehydrogenase complex catalyzes the overall conversion of alpha-keto acids to acyl-CoA and CO(2). It contains multiple copies of 3 enzymatic components: branched-chain alpha-keto acid decarboxylase (E1), lipoamide acyltransferase (E2) and lipoamide dehydrogenase (E3). Its function is as follows. Also acts in the glycine cleavage system. The sequence is that of Dihydrolipoyl dehydrogenase (lpdG) from Pseudomonas aeruginosa (strain ATCC 15692 / DSM 22644 / CIP 104116 / JCM 14847 / LMG 12228 / 1C / PRS 101 / PAO1).